Consider the following 680-residue polypeptide: Galactose oxidase (680 aa).

The N-terminal stretch at 1 to 24 (MKHFLSLALCFSSINAVAVTVPHK) is a signal peptide. The propeptide occupies 25–41 (SGGTGSPEGSLQFLSLR). An F5/8 type C domain is found at 42–189 (ASAPIGSAIS…SIAEINVFQA (148 aa)). The cysteines at positions 59 and 68 are disulfide-linked. Kelch repeat units follow at residues 223-268 (RVLM…HDMF), 279-321 (QIVV…TMSD), 323-372 (RVFT…LYRS), 436-490 (KILT…VLPD), and 492-544 (STFI…LLLP). Residues 269-313 (CPGISMDGNGQIVVTGGNDAKKTSLYDSSSDSWIPGPDMQVARGY) constitute a cross-link (3'-(S-cysteinyl)-tyrosine (Cys-Tyr)). Residue Tyr313 participates in Cu cation binding. Cu cation contacts are provided by Tyr536 and His537. The active-site Proton acceptor is the Tyr536. A disulfide bridge connects residues Cys556 and Cys559. A Cu cation-binding site is contributed by His622.

As to quaternary structure, monomer. It depends on Cu(2+) as a cofactor. Galactose oxidase contains a protein-derived free radical cofactor. In the active state, Tyr-313, which is cross-linked to Cys-269 via a thioether bond, is oxidized to a radical and acts with Cu(2+) as a two-electron acceptor in the oxidation reaction. The cross-link is believed to modulate the redox potential of the tyrosyl radical, which is further stabilized by a stacking interaction with Trp-331 in the active site. The post-translational formation of the cross-link is closely linked to the propeptide cleavage event, and both are copper-dependent, autocatalytic processes. The propeptide may act as an intramolecular chaperone, facilitating thioester bond formation and copper binding by positioning of active-site residues, including copper ligands.

It localises to the secreted. The enzyme catalyses D-galactose + O2 = D-galacto-hexodialdose + H2O2. In terms of biological role, catalyzes the sterospecific oxidation of primary alcohols to the corresponding aldehydes. The biologically relevant substrate of the enzyme is not known as the enzyme exhibits broad substrate specificity from small alcohols through sugars to oligo- and polysaccharides. This Gibberella zeae (strain ATCC MYA-4620 / CBS 123657 / FGSC 9075 / NRRL 31084 / PH-1) (Wheat head blight fungus) protein is Galactose oxidase (GAOA).